The following is a 108-amino-acid chain: Small ribosomal subunit protein uS17 (108 aa).

Belongs to the universal ribosomal protein uS17 family. Part of the 30S ribosomal subunit.

Functionally, one of the primary rRNA binding proteins, it binds specifically to the 5'-end of 16S ribosomal RNA. The polypeptide is Small ribosomal subunit protein uS17 (Methanoregula boonei (strain DSM 21154 / JCM 14090 / 6A8)).